The chain runs to 232 residues: Phosphoribosylformylglycinamidine synthase subunit PurQ (232 aa).

One can recognise a Glutamine amidotransferase type-1 domain in the interval 2–232 (RIGVITFPGS…SVVRSTLVEA (231 aa)). Cysteine 85 (nucleophile) is an active-site residue. Catalysis depends on residues histidine 194 and glutamate 196.

In terms of assembly, part of the FGAM synthase complex composed of 1 PurL, 1 PurQ and 2 PurS subunits.

Its subcellular location is the cytoplasm. It catalyses the reaction N(2)-formyl-N(1)-(5-phospho-beta-D-ribosyl)glycinamide + L-glutamine + ATP + H2O = 2-formamido-N(1)-(5-O-phospho-beta-D-ribosyl)acetamidine + L-glutamate + ADP + phosphate + H(+). It carries out the reaction L-glutamine + H2O = L-glutamate + NH4(+). The protein operates within purine metabolism; IMP biosynthesis via de novo pathway; 5-amino-1-(5-phospho-D-ribosyl)imidazole from N(2)-formyl-N(1)-(5-phospho-D-ribosyl)glycinamide: step 1/2. Its function is as follows. Part of the phosphoribosylformylglycinamidine synthase complex involved in the purines biosynthetic pathway. Catalyzes the ATP-dependent conversion of formylglycinamide ribonucleotide (FGAR) and glutamine to yield formylglycinamidine ribonucleotide (FGAM) and glutamate. The FGAM synthase complex is composed of three subunits. PurQ produces an ammonia molecule by converting glutamine to glutamate. PurL transfers the ammonia molecule to FGAR to form FGAM in an ATP-dependent manner. PurS interacts with PurQ and PurL and is thought to assist in the transfer of the ammonia molecule from PurQ to PurL. This chain is Phosphoribosylformylglycinamidine synthase subunit PurQ, found in Leifsonia xyli subsp. xyli (strain CTCB07).